Reading from the N-terminus, the 217-residue chain is 7-cyano-7-deazaguanine synthase (217 aa).

10-20 (FSGGQDSTTCL) is a binding site for ATP. Residues cysteine 185, cysteine 194, cysteine 197, and cysteine 200 each contribute to the Zn(2+) site.

Belongs to the QueC family. Homodimer. It depends on Zn(2+) as a cofactor.

It carries out the reaction 7-carboxy-7-deazaguanine + NH4(+) + ATP = 7-cyano-7-deazaguanine + ADP + phosphate + H2O + H(+). It participates in purine metabolism; 7-cyano-7-deazaguanine biosynthesis. Functionally, catalyzes the ATP-dependent conversion of 7-carboxy-7-deazaguanine (CDG) to 7-cyano-7-deazaguanine (preQ(0)). The sequence is that of 7-cyano-7-deazaguanine synthase from Streptococcus thermophilus (strain ATCC BAA-491 / LMD-9).